We begin with the raw amino-acid sequence, 915 residues long: MAVEDMDKKYRISDIARELQVSPQEVLRFVKEGGAKVASTSSMVDSEMRGLIFAEFSNEKKMVDETRKIRAEKQLRLTRLEEQSRRAVEKEQILRETLTPSPAPPVHEPPVRAAAQPAPVPVAAGEAPSPLAPETPAPATESAPAVAPAGVPAAEPVSEALSAPLPEPVPEPVPEPPAPEVVAVVEAVPNDQIVSYDAPKNIGGLTVLGTLDMQSEADRKKKGKKKNFREQAVALKDEFETPSSTTLDEDGVPKKKPVAGVQPEGFGVGKKKGKKKKPAVDDKVISANIRTTISGMDDSSGTGSRSKFRKQRKMEREREQEEADLLRESEQQIMRVTEYASPHELAELMGVTAKDIIQKCFALGKFVTINQRLDKESIELIALEFGFEAEFISEVEATAVEAVVDRDEDLETRPPVVTIMGHVDHGKTSLLDYIRNSNVVAGESGGITQHVAAYEVTASNGRKITFLDTPGHEAFTAMRARGAQVTDIVILVVAADDSVMPQTIEAINHAKAAGVPIVVAINKMDKPEANPEKIKTQLSEAGVLVEEWGGESQCQEISAKKGLGIEELMEKVLTEAEMRELKGNFSKDVPATGVIVESELDKGKGVISAVLVQRGYLKVGDPFVAGNIMGKVRALMDERGKRIPSAGPSQPVSVLGFEDLPQAGDVLTVMASDKEARDLAQKRQIIRREHEFRRSTRVKLDSIARQIKEGLMKELSVIIKADTDGSIQALADGLMKIQNEEVKVQIIHQGVGQITETDVLLAAASDAIIIGFRVRPNVNAKKLAEKEDLDVRFYSVIYHVLEDVEKALEGMLSPELHEESLGSLEIRQVFRVPKVGNVGGCHVLEGKILRDAKVRLLRDGVQIYDGMLDTLRRFKDDVKEVDAGYECGVGLKNYDDIKVGDVVEAYRIVEKKRKL.

Basic and acidic residues predominate over residues 83–94 (QSRRAVEKEQIL). Disordered regions lie at residues 83-177 (QSRR…PEPP), 216-280 (EADR…KPAV), and 293-328 (ISGM…LLRE). 2 stretches are compositionally biased toward low complexity: residues 111–129 (VRAA…EAPS) and 137–164 (APAT…LSAP). The segment covering 165-177 (LPEPVPEPVPEPP) has biased composition (pro residues). Positions 293–305 (ISGMDDSSGTGSR) are enriched in polar residues. A compositionally biased stretch (basic and acidic residues) spans 314 to 328 (MEREREQEEADLLRE). One can recognise a tr-type G domain in the interval 412-582 (TRPPVVTIMG…LTEAEMRELK (171 aa)). The interval 421–428 (GHVDHGKT) is G1. 421–428 (GHVDHGKT) contributes to the GTP binding site. Residues 446 to 450 (GITQH) form a G2 region. Residues 468 to 471 (DTPG) are G3. Residues 468 to 472 (DTPGH) and 522 to 525 (NKMD) contribute to the GTP site. Positions 522–525 (NKMD) are G4. The segment at 558-560 (SAK) is G5.

The protein belongs to the TRAFAC class translation factor GTPase superfamily. Classic translation factor GTPase family. IF-2 subfamily.

Its subcellular location is the cytoplasm. One of the essential components for the initiation of protein synthesis. Protects formylmethionyl-tRNA from spontaneous hydrolysis and promotes its binding to the 30S ribosomal subunits. Also involved in the hydrolysis of GTP during the formation of the 70S ribosomal complex. This is Translation initiation factor IF-2 from Chlorobium luteolum (strain DSM 273 / BCRC 81028 / 2530) (Pelodictyon luteolum).